A 173-amino-acid chain; its full sequence is ATP synthase subunit b (173 aa).

The chain crosses the membrane as a helical span at residues 12–32 (LDVNPGLVVWTLVTFLVVVLV).

It belongs to the ATPase B chain family. In terms of assembly, F-type ATPases have 2 components, F(1) - the catalytic core - and F(0) - the membrane proton channel. F(1) has five subunits: alpha(3), beta(3), gamma(1), delta(1), epsilon(1). F(0) has three main subunits: a(1), b(2) and c(10-14). The alpha and beta chains form an alternating ring which encloses part of the gamma chain. F(1) is attached to F(0) by a central stalk formed by the gamma and epsilon chains, while a peripheral stalk is formed by the delta and b chains.

It is found in the cell inner membrane. Its function is as follows. F(1)F(0) ATP synthase produces ATP from ADP in the presence of a proton or sodium gradient. F-type ATPases consist of two structural domains, F(1) containing the extramembraneous catalytic core and F(0) containing the membrane proton channel, linked together by a central stalk and a peripheral stalk. During catalysis, ATP synthesis in the catalytic domain of F(1) is coupled via a rotary mechanism of the central stalk subunits to proton translocation. Functionally, component of the F(0) channel, it forms part of the peripheral stalk, linking F(1) to F(0). This chain is ATP synthase subunit b, found in Leptospira interrogans serogroup Icterohaemorrhagiae serovar copenhageni (strain Fiocruz L1-130).